The primary structure comprises 750 residues: Cellulose synthase-like protein H1 (750 aa).

2 helical membrane-spanning segments follow: residues Leu27–Ala47 and Ala52–Trp72. Catalysis depends on residues Asp137 and Asp459. 6 consecutive transmembrane segments (helical) span residues Val537–Leu557, Gly570–Ile590, Ile608–Phe628, Val664–Trp684, Gly697–Leu717, and Gly727–Cys747.

Belongs to the glycosyltransferase 2 family. Plant cellulose synthase-like H subfamily.

The protein localises to the golgi apparatus membrane. Functionally, thought to be a Golgi-localized beta-glycan synthase that polymerize the backbones of noncellulosic polysaccharides (hemicelluloses) of plant cell wall. This Oryza sativa subsp. japonica (Rice) protein is Cellulose synthase-like protein H1 (CSLH1).